Consider the following 344-residue polypeptide: Putative [LysW]-lysine/[LysW]-ornithine hydrolase (344 aa).

His66 is a Zn(2+) binding site. Asp68 is an active-site residue. Asp90 lines the Zn(2+) pocket. Catalysis depends on Glu117, which acts as the Proton acceptor. 3 residues coordinate Zn(2+): Glu118, Glu139, and His297.

The protein belongs to the peptidase M20A family. LysK subfamily. It depends on Zn(2+) as a cofactor. Requires Co(2+) as cofactor.

The protein resides in the cytoplasm. It catalyses the reaction [amino-group carrier protein]-C-terminal-gamma-(L-lysyl)-L-glutamate + H2O = [amino-group carrier protein]-C-terminal-L-glutamate + L-lysine. The enzyme catalyses [amino-group carrier protein]-C-terminal-gamma-(L-ornithyl)-L-glutamate + H2O = [amino-group carrier protein]-C-terminal-L-glutamate + L-ornithine. It functions in the pathway amino-acid biosynthesis; L-lysine biosynthesis via AAA pathway; L-lysine from L-alpha-aminoadipate (Thermus route): step 5/5. It participates in amino-acid biosynthesis; L-arginine biosynthesis. In terms of biological role, catalyzes the release of L-lysine from [LysW]-gamma-L-lysine and the release of L-ornithine from [LysW]-L-ornithine. The polypeptide is Putative [LysW]-lysine/[LysW]-ornithine hydrolase (Thermococcus kodakarensis (strain ATCC BAA-918 / JCM 12380 / KOD1) (Pyrococcus kodakaraensis (strain KOD1))).